The following is a 409-amino-acid chain: MFNTSTFVYIATTADTKGQELEYVRQIIANLGLPTVTVDLSTSSLPANPAADICAEEVAGYHPEGARAVFCPNRSHAITAMALAFERFLLTRHDIAALLGLGGSGGTAIITPAMQKLPIGLPKLMVSSMAAGDVSVYVGNSDIAMLYSVTDIAGLNRISRRVLSNAACQIAGAVRFATAHDIEEKPAVGLTMFGVTTPCIKMVVSALEPQWDCLVFHATGSGGRALEKLIDSRLLSAALDLTTTEVADYLFGGVLPCNEERFSAIARTGIPCILSCGALDMINFGPPETVPARYAERLIHQHNPQVTLVRTTPQENASIGRWIGEKMNACSGEVRFVIPGGGVSALDAPGQPFWDPQALAAFMQALESTLRPTNKRRLIKTAYHINDPRFAHIVTEQFQHIANPRLLSK.

The protein belongs to the UPF0261 family.

The chain is UPF0261 protein Spro_4740 from Serratia proteamaculans (strain 568).